A 203-amino-acid chain; its full sequence is Enterotoxin-like toxin X (203 aa).

It belongs to the staphylococcal/streptococcal toxin family.

It is found in the secreted. Its function is as follows. Plays a role in the inhibition of the host innate immune system. Inhibits phagocytosis and killing by human neutrophils by interacting with multiple neutrophil surface glycoproteins in a sialic acid-dependent manner. This chain is Enterotoxin-like toxin X, found in Staphylococcus aureus (strain NCTC 8325 / PS 47).